We begin with the raw amino-acid sequence, 146 residues long: Large ribosomal subunit protein uL15 (146 aa).

Residues 1 to 58 (MNLSNLRAPKKANRNRKRVGRGMGSGHGKTSTRGHKGQRSRSGSRSMRGFEGGQMPLH) are disordered. Composition is skewed to basic residues over residues 8–20 (APKK…KRVG) and 30–39 (TSTRGHKGQR). Positions 40-49 (SRSGSRSMRG) are enriched in low complexity.

This sequence belongs to the universal ribosomal protein uL15 family. Part of the 50S ribosomal subunit.

Functionally, binds to the 23S rRNA. This Acidobacterium capsulatum (strain ATCC 51196 / DSM 11244 / BCRC 80197 / JCM 7670 / NBRC 15755 / NCIMB 13165 / 161) protein is Large ribosomal subunit protein uL15.